Reading from the N-terminus, the 919-residue chain is TRPM8 channel-associated factor 2 (919 aa).

The Peptidase M60 domain maps to 542-841 (DCWVSTGLYL…TYLQLQEAFG (300 aa)).

Belongs to the TCAF family. Isoform 2 interacts with TRPM8 (via N-terminus and C-terminus domains); the interaction inhibits TRPM8 channel activity. Interacts with TRPV6. In terms of tissue distribution, isoform 2 is expressed in the prostate and in cancerous prostate samples.

The protein resides in the cell membrane. Negatively regulates the plasma membrane cation channel TRPM8 activity. Involved in the recruitment of TRPM8 to the cell surface. Promotes prostate cancer cell migration stimulation in a TRPM8-dependent manner. The polypeptide is TRPM8 channel-associated factor 2 (Homo sapiens (Human)).